Here is a 125-residue protein sequence, read N- to C-terminus: Large ribosomal subunit protein bL12 (125 aa).

This sequence belongs to the bacterial ribosomal protein bL12 family. Homodimer. Part of the ribosomal stalk of the 50S ribosomal subunit. Forms a multimeric L10(L12)X complex, where L10 forms an elongated spine to which 2 to 4 L12 dimers bind in a sequential fashion. Binds GTP-bound translation factors.

Its function is as follows. Forms part of the ribosomal stalk which helps the ribosome interact with GTP-bound translation factors. Is thus essential for accurate translation. This is Large ribosomal subunit protein bL12 from Helicobacter pylori (strain HPAG1).